A 175-amino-acid chain; its full sequence is Co-chaperone protein HscB homolog (175 aa).

The region spanning 7-79 (SHFDLFHLPA…LQRASYLLSL (73 aa)) is the J domain.

Belongs to the HscB family. In terms of assembly, interacts with HscA and stimulates its ATPase activity.

Co-chaperone involved in the maturation of iron-sulfur cluster-containing proteins. Seems to help targeting proteins to be folded toward HscA. The protein is Co-chaperone protein HscB homolog of Burkholderia vietnamiensis (strain G4 / LMG 22486) (Burkholderia cepacia (strain R1808)).